A 131-amino-acid polypeptide reads, in one-letter code: D-ribose pyranase (131 aa).

His20 serves as the catalytic Proton donor. Substrate is bound by residues Asp28, His98, and 120–122; that span reads YAN.

Belongs to the RbsD / FucU family. RbsD subfamily. In terms of assembly, homodecamer.

It localises to the cytoplasm. The enzyme catalyses beta-D-ribopyranose = beta-D-ribofuranose. Its pathway is carbohydrate metabolism; D-ribose degradation; D-ribose 5-phosphate from beta-D-ribopyranose: step 1/2. Its function is as follows. Catalyzes the interconversion of beta-pyran and beta-furan forms of D-ribose. The sequence is that of D-ribose pyranase from Bacillus cereus (strain AH187).